Reading from the N-terminus, the 711-residue chain is Long-chain-fatty-acid--CoA ligase 4 (711 aa).

Residues 8–28 (LTIILLPVHLLITIYSALIFI) form a helical; Signal-anchor for type III membrane protein membrane-spanning segment. Over 29–711 (PWYFLTNAKK…KDIERMYGGK (683 aa)) the chain is Cytoplasmic. S447 is subject to Phosphoserine.

Belongs to the ATP-dependent AMP-binding enzyme family. The cofactor is Mg(2+). Abundant in steroidogenic tissues, also found in the kidney, brain and liver.

The protein resides in the mitochondrion outer membrane. Its subcellular location is the peroxisome membrane. The protein localises to the microsome membrane. It localises to the endoplasmic reticulum membrane. It is found in the cell membrane. The catalysed reaction is a long-chain fatty acid + ATP + CoA = a long-chain fatty acyl-CoA + AMP + diphosphate. It catalyses the reaction (5Z,8Z,11Z,14Z)-eicosatetraenoate + ATP + CoA = (5Z,8Z,11Z,14Z)-eicosatetraenoyl-CoA + AMP + diphosphate. The enzyme catalyses 15-hydroxy-(5Z,8Z,11Z,13E)-eicosatetraenoate + ATP + CoA = 15-hydroxy-(5Z,8Z,11Z,13E)-eicosatetraenoyl-CoA + AMP + diphosphate. It carries out the reaction 12-hydroxy-(5Z,8Z,10E,14Z)-eicosatetraenoate + ATP + CoA = 12-hydroxy-(5Z,8Z,10E,14Z)-eicosatetraenoyl-CoA + AMP + diphosphate. The catalysed reaction is 5-hydroxy-(6E,8Z,11Z,14Z)-eicosatetraenoate + ATP + CoA = 5-hydroxy-(6E,8Z,11Z,14Z)-eicosatetraenoyl-CoA + AMP + diphosphate. It catalyses the reaction 5,6-epoxy-(8Z,11Z,14Z)-eicosatrienoate + ATP + CoA = 5,6-epoxy-(8Z,11Z,14Z)-eicosatrienoyl-CoA + AMP + diphosphate. The enzyme catalyses 14,15-epoxy-(5Z,8Z,11Z)-eicosatrienoate + ATP + CoA = 14,15-epoxy-(5Z,8Z,11Z)-eicosatrienoyl-CoA + AMP + diphosphate. It carries out the reaction 11,12-epoxy-(5Z,8Z,14Z)-eicosatrienoate + ATP + CoA = 11,12-epoxy-(5Z,8Z,14Z)-eicosatrienoyl-CoA + AMP + diphosphate. The catalysed reaction is 8,9-epoxy-(5Z,11Z,14Z)-eicosatrienoate + ATP + CoA = 8,9-epoxy-(5Z,11Z,14Z)-eicosatrienoyl-CoA + AMP + diphosphate. It catalyses the reaction hexadecanoate + ATP + CoA = hexadecanoyl-CoA + AMP + diphosphate. The enzyme catalyses (E)-hexadec-2-enoate + ATP + CoA = (2E)-hexadecenoyl-CoA + AMP + diphosphate. With respect to regulation, both triacsin C and rosiglitazone inhibit arachidonoyl-CoA ligase activity. Its function is as follows. Catalyzes the conversion of long-chain fatty acids to their active form acyl-CoA for both synthesis of cellular lipids, and degradation via beta-oxidation. Preferentially activates arachidonate and eicosapentaenoate as substrates. Preferentially activates 8,9-EET &gt; 14,15-EET &gt; 5,6-EET &gt; 11,12-EET. Modulates glucose-stimulated insulin secretion by regulating the levels of unesterified EETs. Modulates prostaglandin E2 secretion. This is Long-chain-fatty-acid--CoA ligase 4 (Acsl4) from Mus musculus (Mouse).